A 277-amino-acid polypeptide reads, in one-letter code: Undecaprenyl-diphosphatase (277 aa).

6 helical membrane passes run M88–D108, M117–V137, F157–L179, S191–V211, L227–V247, and F255–I275.

It belongs to the UppP family.

The protein localises to the cell membrane. The enzyme catalyses di-trans,octa-cis-undecaprenyl diphosphate + H2O = di-trans,octa-cis-undecaprenyl phosphate + phosphate + H(+). Functionally, catalyzes the dephosphorylation of undecaprenyl diphosphate (UPP). Confers resistance to bacitracin. The sequence is that of Undecaprenyl-diphosphatase from Paenarthrobacter aurescens (strain TC1).